The sequence spans 210 residues: Ribonuclease HII (210 aa).

The RNase H type-2 domain occupies 18–210 (GLIAGVDEVG…FKPVKALLGL (193 aa)). A divalent metal cation contacts are provided by aspartate 24, glutamate 25, and aspartate 116.

Belongs to the RNase HII family. The cofactor is Mn(2+). Requires Mg(2+) as cofactor.

Its subcellular location is the cytoplasm. The enzyme catalyses Endonucleolytic cleavage to 5'-phosphomonoester.. Endonuclease that specifically degrades the RNA of RNA-DNA hybrids. The chain is Ribonuclease HII from Shewanella baltica (strain OS223).